The chain runs to 307 residues: Glutaminase (307 aa).

Residues serine 66, asparagine 117, glutamate 161, asparagine 168, tyrosine 192, tyrosine 243, and valine 261 each coordinate substrate.

It belongs to the glutaminase family. In terms of assembly, homotetramer.

The catalysed reaction is L-glutamine + H2O = L-glutamate + NH4(+). This is Glutaminase from Serratia proteamaculans (strain 568).